The sequence spans 494 residues: WD repeat-containing protein 37 (494 aa).

2 stretches are compositionally biased toward polar residues: residues 1–13 (MPTE…TARQ) and 22–31 (SLSIRRTNSS). The interval 1–50 (MPTESASCSTARQTKQKRKSHSLSIRRTNSSEQERTGLPRDMLEGQDSKL) is disordered. Positions 32–47 (EQERTGLPRDMLEGQD) are enriched in basic and acidic residues. WD repeat units follow at residues 154–194 (GHRD…CLVK) and 197–236 (GHVG…PTPQ). The interval 237–265 (PVADTSISGEDEVECSDKDEPDLDGDVSS) is disordered. Residues 245–263 (GEDEVECSDKDEPDLDGDV) are compositionally biased toward acidic residues. WD repeat units lie at residues 279-318 (SHQG…LVHS), 321-360 (GHDQ…IHSV), 365-403 (GHTD…SPIA), 406-445 (RTDS…LARL), and 452-493 (GHRR…LLQE).

As to quaternary structure, forms homodimers. Interacts with PACS1. Interacts with PACS2.

Its subcellular location is the cytoplasm. It localises to the nucleus. Required for normal ER Ca2+ handling in lymphocytes. Together with PACS1, it plays an essential role in stabilizing peripheral lymphocyte populations. In Homo sapiens (Human), this protein is WD repeat-containing protein 37 (WDR37).